Here is a 254-residue protein sequence, read N- to C-terminus: Alcohol dehydrogenase (254 aa).

An NAD(+)-binding site is contributed by Phe-10 to Leu-33. Ser-138 is a substrate binding site. Tyr-151 (proton acceptor) is an active-site residue.

This sequence belongs to the short-chain dehydrogenases/reductases (SDR) family. Homodimer.

The catalysed reaction is a primary alcohol + NAD(+) = an aldehyde + NADH + H(+). It carries out the reaction a secondary alcohol + NAD(+) = a ketone + NADH + H(+). The protein is Alcohol dehydrogenase (Adh) of Scaptomyza crassifemur (Fruit fly).